The following is a 205-amino-acid chain: Potassium-transporting ATPase KdpC subunit (205 aa).

The helical transmembrane segment at 9–29 (VFAVLFLFILGFVYPTVTSLI) threads the bilayer.

This sequence belongs to the KdpC family. As to quaternary structure, the system is composed of three essential subunits: KdpA, KdpB and KdpC.

It is found in the cell membrane. Part of the high-affinity ATP-driven potassium transport (or Kdp) system, which catalyzes the hydrolysis of ATP coupled with the electrogenic transport of potassium into the cytoplasm. This subunit acts as a catalytic chaperone that increases the ATP-binding affinity of the ATP-hydrolyzing subunit KdpB by the formation of a transient KdpB/KdpC/ATP ternary complex. In Thermoplasma acidophilum (strain ATCC 25905 / DSM 1728 / JCM 9062 / NBRC 15155 / AMRC-C165), this protein is Potassium-transporting ATPase KdpC subunit.